A 214-amino-acid chain; its full sequence is MRIILLGAPGAGKGTQAQFIMEKYGIPQISTGDMLRAAVKAGSELGLKAKEIMDAGKLVTDELVIALVKERITQEDCRDGFLLDGFPRTIPQADAMKEAGIKVDYVLEFDVPDELIVERIVGRRVHAASGRVYHVKFNPPKVEDKDDVTGEELTIRKDDQEATVRKRLIEYHQQTAPLVSYYHKEADAGNTQYFKLDGTRNVAEVSAELATILG.

10–15 (GAGKGT) provides a ligand contact to ATP. Residues 30-59 (STGDMLRAAVKAGSELGLKAKEIMDAGKLV) are NMP. Residues Thr31, Arg36, 57 to 59 (KLV), 85 to 88 (GFPR), and Gln92 each bind AMP. The tract at residues 122-159 (GRRVHAASGRVYHVKFNPPKVEDKDDVTGEELTIRKDD) is LID. ATP is bound by residues Arg123 and 132–133 (VY). AMP contacts are provided by Arg156 and Arg167. Position 200 (Arg200) interacts with ATP.

Belongs to the adenylate kinase family. Monomer.

It is found in the cytoplasm. The enzyme catalyses AMP + ATP = 2 ADP. It participates in purine metabolism; AMP biosynthesis via salvage pathway; AMP from ADP: step 1/1. Functionally, catalyzes the reversible transfer of the terminal phosphate group between ATP and AMP. Plays an important role in cellular energy homeostasis and in adenine nucleotide metabolism. The chain is Adenylate kinase from Yersinia pseudotuberculosis serotype O:1b (strain IP 31758).